The following is a 212-amino-acid chain: Large ribosomal subunit protein uL3 (212 aa).

The span at 139–153 (LSHRVTGSIGQNQTP) shows a compositional bias: polar residues. Positions 139–161 (LSHRVTGSIGQNQTPGKVFKGKK) are disordered. At Gln-151 the chain carries N5-methylglutamine.

The protein belongs to the universal ribosomal protein uL3 family. In terms of assembly, part of the 50S ribosomal subunit. Forms a cluster with proteins L14 and L19. In terms of processing, methylated by PrmB.

One of the primary rRNA binding proteins, it binds directly near the 3'-end of the 23S rRNA, where it nucleates assembly of the 50S subunit. This is Large ribosomal subunit protein uL3 from Baumannia cicadellinicola subsp. Homalodisca coagulata.